Consider the following 641-residue polypeptide: Tetracycline resistance protein TetQ (641 aa).

The tr-type G domain maps to 1-244 (MNIINLGILA…AITSFILPPA (244 aa)). Residues 10–17 (AHIDAGKT), 74–78 (DTPGH), and 128–131 (NKID) contribute to the GTP site.

This sequence belongs to the TRAFAC class translation factor GTPase superfamily. Classic translation factor GTPase family. TetM/TetO subfamily.

Abolishes the inhibitory effect of tetracyclin on protein synthesis by a non-covalent modification of the ribosomes. The protein is Tetracycline resistance protein TetQ (tetQ) of Xylanibacter ruminicola (Prevotella ruminicola).